The chain runs to 255 residues: Large ribosomal subunit protein uL4 (255 aa).

This sequence belongs to the universal ribosomal protein uL4 family. In terms of assembly, part of the 50S ribosomal subunit.

In terms of biological role, one of the primary rRNA binding proteins, this protein initially binds near the 5'-end of the 23S rRNA. It is important during the early stages of 50S assembly. It makes multiple contacts with different domains of the 23S rRNA in the assembled 50S subunit and ribosome. Forms part of the polypeptide exit tunnel. The chain is Large ribosomal subunit protein uL4 from Pyrococcus abyssi (strain GE5 / Orsay).